Consider the following 203-residue polypeptide: Octanoyltransferase (203 aa).

One can recognise a BPL/LPL catalytic domain in the interval 30-203 (EDQDNYFFIT…HIIKEGRKLV (174 aa)). Substrate-binding positions include 69-76 (RGGSVTFH), 135-137 (SVG), and 148-150 (GIS). The active-site Acyl-thioester intermediate is the Cys-166.

This sequence belongs to the LipB family.

The protein resides in the cytoplasm. The enzyme catalyses octanoyl-[ACP] + L-lysyl-[protein] = N(6)-octanoyl-L-lysyl-[protein] + holo-[ACP] + H(+). Its pathway is protein modification; protein lipoylation via endogenous pathway; protein N(6)-(lipoyl)lysine from octanoyl-[acyl-carrier-protein]: step 1/2. In terms of biological role, catalyzes the transfer of endogenously produced octanoic acid from octanoyl-acyl-carrier-protein onto the lipoyl domains of lipoate-dependent enzymes. Lipoyl-ACP can also act as a substrate although octanoyl-ACP is likely to be the physiological substrate. The sequence is that of Octanoyltransferase from Persephonella marina (strain DSM 14350 / EX-H1).